A 507-amino-acid chain; its full sequence is Histidine ammonia-lyase (507 aa).

Positions 141-143 (ASG) form a cross-link, 5-imidazolinone (Ala-Gly). Position 142 is a 2,3-didehydroalanine (Ser) (serine 142).

This sequence belongs to the PAL/histidase family. In terms of processing, contains an active site 4-methylidene-imidazol-5-one (MIO), which is formed autocatalytically by cyclization and dehydration of residues Ala-Ser-Gly.

The protein resides in the cytoplasm. It catalyses the reaction L-histidine = trans-urocanate + NH4(+). The protein operates within amino-acid degradation; L-histidine degradation into L-glutamate; N-formimidoyl-L-glutamate from L-histidine: step 1/3. This is Histidine ammonia-lyase from Cereibacter sphaeroides (strain KD131 / KCTC 12085) (Rhodobacter sphaeroides).